The following is a 165-amino-acid chain: uncharacterized protein (165 aa).

One can recognise an RCK C-terminal domain in the interval 76–161 (LEQVESALDD…LKRLIREKLT (86 aa)).

This is an uncharacterized protein from Bacillus subtilis (strain 168).